Consider the following 688-residue polypeptide: Beta-galactosidase BglY (688 aa).

R118 is a substrate binding site. Position 122 (C122) interacts with Zn(2+). A substrate-binding site is contributed by N156. Catalysis depends on E157, which acts as the Proton donor. The Zn(2+) site is built by C162, C164, and C167. Residue E313 is the Nucleophile of the active site. Substrate is bound by residues W321 and 361–364 (EKFH).

Belongs to the glycosyl hydrolase 42 family.

It catalyses the reaction Hydrolysis of terminal non-reducing beta-D-galactose residues in beta-D-galactosides.. Ca(2+), Mg(2+) and EDTA have little effect on enzyme activity at 1-10 mM. Zn(2+) at 3, 5, 7 or 10 mM inhibits activity by 20%, 30%, 40% and 65%, respectively. Functionally, hydrolyzes o-nitrophenyl-beta-D-galactopyranoside (ONPG) and p-nitrophenyl-beta-D-fucopyranoside (PNPF), but not p-nitrophenyl-beta-D-glucopyranoside (PNPG), p-nitrophenyl-beta-D-xylopyranoside (PNPX) or p-nitrophenyl-beta-D-arabinopyranoside (PNPA). Also hydrolyzes lactose, including lactose in milk. The polypeptide is Beta-galactosidase BglY (bglY) (Alicyclobacillus acidocaldarius subsp. acidocaldarius (strain ATCC 27009 / DSM 446 / BCRC 14685 / JCM 5260 / KCTC 1825 / NBRC 15652 / NCIMB 11725 / NRRL B-14509 / 104-IA) (Bacillus acidocaldarius)).